We begin with the raw amino-acid sequence, 215 residues long: NADH-quinone oxidoreductase subunit C (215 aa).

The protein belongs to the complex I 30 kDa subunit family. As to quaternary structure, NDH-1 is composed of 14 different subunits. Subunits NuoB, C, D, E, F, and G constitute the peripheral sector of the complex.

It localises to the cell inner membrane. The enzyme catalyses a quinone + NADH + 5 H(+)(in) = a quinol + NAD(+) + 4 H(+)(out). Its function is as follows. NDH-1 shuttles electrons from NADH, via FMN and iron-sulfur (Fe-S) centers, to quinones in the respiratory chain. The immediate electron acceptor for the enzyme in this species is believed to be ubiquinone. Couples the redox reaction to proton translocation (for every two electrons transferred, four hydrogen ions are translocated across the cytoplasmic membrane), and thus conserves the redox energy in a proton gradient. This is NADH-quinone oxidoreductase subunit C from Bordetella parapertussis (strain 12822 / ATCC BAA-587 / NCTC 13253).